The sequence spans 214 residues: Outer-membrane lipoprotein LolB (214 aa).

An N-terminal signal peptide occupies residues Met1 to Gly25. Cys26 is lipidated: N-palmitoyl cysteine. Cys26 carries the S-diacylglycerol cysteine lipid modification.

This sequence belongs to the LolB family. As to quaternary structure, monomer.

Its subcellular location is the cell outer membrane. Functionally, plays a critical role in the incorporation of lipoproteins in the outer membrane after they are released by the LolA protein. In Shewanella putrefaciens (strain CN-32 / ATCC BAA-453), this protein is Outer-membrane lipoprotein LolB.